Consider the following 426-residue polypeptide: D-tagatose-1,6-bisphosphate aldolase subunit KbaZ (426 aa).

This sequence belongs to the GatZ/KbaZ family. KbaZ subfamily. As to quaternary structure, forms a complex with KbaY.

It functions in the pathway carbohydrate metabolism; D-tagatose 6-phosphate degradation; D-glyceraldehyde 3-phosphate and glycerone phosphate from D-tagatose 6-phosphate: step 2/2. Component of the tagatose-1,6-bisphosphate aldolase KbaYZ that is required for full activity and stability of the Y subunit. Could have a chaperone-like function for the proper and stable folding of KbaY. When expressed alone, KbaZ does not show any aldolase activity. The sequence is that of D-tagatose-1,6-bisphosphate aldolase subunit KbaZ from Escherichia coli O17:K52:H18 (strain UMN026 / ExPEC).